We begin with the raw amino-acid sequence, 253 residues long: Indole-3-glycerol phosphate synthase (253 aa).

It belongs to the TrpC family.

The catalysed reaction is 1-(2-carboxyphenylamino)-1-deoxy-D-ribulose 5-phosphate + H(+) = (1S,2R)-1-C-(indol-3-yl)glycerol 3-phosphate + CO2 + H2O. It participates in amino-acid biosynthesis; L-tryptophan biosynthesis; L-tryptophan from chorismate: step 4/5. The sequence is that of Indole-3-glycerol phosphate synthase from Bacillus thuringiensis (strain Al Hakam).